The following is a 1606-amino-acid chain: Thrombospondin type-1 domain-containing protein 7B (1606 aa).

The first 31 residues, Met-1–Ala-31, serve as a signal peptide directing secretion. Over Ala-32 to Lys-1555 the chain is Extracellular. TSP type-1 domains follow at residues Asn-40–Asp-98, Asp-102–Pro-177, Asp-179–Pro-233, Asp-336–Gly-392, Pro-399–Ser-482, Asp-484–Tyr-543, Asp-601–Met-661, Gln-662–Lys-735, Asp-737–Pro-796, Val-797–Arg-869, Asp-871–Asp-924, Glu-925–Pro-998, Asp-1000–Pro-1125, Glu-1127–Phe-1181, Gln-1182–Val-1245, Asn-1247–Tyr-1302, Ser-1303–Pro-1368, and Asp-1370–Tyr-1431. Residues Asn-150, Asn-190, and Asn-219 are each glycosylated (N-linked (GlcNAc...) asparagine). Intrachain disulfides connect Cys-411–Cys-477, Cys-431–Cys-481, and Cys-442–Cys-466. 3 disulfide bridges follow: Cys-602-Cys-643, Cys-613-Cys-617, and Cys-655-Cys-660. An N-linked (GlcNAc...) asparagine glycan is attached at Asn-683. Intrachain disulfides connect Cys-738–Cys-779, Cys-749–Cys-753, and Cys-789–Cys-795. An N-linked (GlcNAc...) asparagine glycan is attached at Asn-757. Asn-842 carries N-linked (GlcNAc...) asparagine glycosylation. 3 disulfide bridges follow: Cys-872-Cys-907, Cys-883-Cys-887, and Cys-921-Cys-923. Asn-933 carries an N-linked (GlcNAc...) asparagine glycan. 6 disulfides stabilise this stretch: Cys-937-Cys-993, Cys-959-Cys-997, Cys-970-Cys-983, Cys-1001-Cys-1038, Cys-1012-Cys-1016, and Cys-1120-Cys-1124. An N-linked (GlcNAc...) asparagine glycan is attached at Asn-1186. Cystine bridges form between Cys-1248–Cys-1286, Cys-1259–Cys-1263, and Cys-1296–Cys-1301. The N-linked (GlcNAc...) asparagine glycan is linked to Asn-1308. Cystine bridges form between Cys-1371/Cys-1415, Cys-1382/Cys-1386, and Cys-1425/Cys-1430. 2 N-linked (GlcNAc...) asparagine glycosylation sites follow: Asn-1456 and Asn-1524. The helical transmembrane segment at Ile-1556–Ser-1576 threads the bilayer. The Cytoplasmic segment spans residues Tyr-1577–Met-1606. The segment at Pro-1583–Met-1606 is disordered. Positions His-1586–Pro-1595 are enriched in polar residues.

The protein resides in the membrane. This chain is Thrombospondin type-1 domain-containing protein 7B, found in Homo sapiens (Human).